The chain runs to 456 residues: MVDVHFSDEVPPLRHLLRAGPQAQIAIEGLTYLSANLIRGIALTPTQGLARGARVIDTGQSLQVPIGEHLLGRAFNVFGDPIDGLGPLKGMKRSLHGQAVPLHQRTTGTDILVTGIKAIDLLAPLERGSKAGLFGGAGVGKTVLITEMIHNIVSRYDGVSIFCGIGERSREGEELYREMKAAGVLNNTVMVFGQMNEPPGSRFRVGHAALTMAEYFRDQAHRDVLLMIDNVFRFIQAGSEVSGLMGQLPSRVGYQPTLATELAELEERICSTAHGAITSVQAVYIPADDLTDPAAVHTFSHLSASIVLSRKRTSEGLYPAVDPLQSGSKMLTPSVVGQRHYQVAQAVRKTLAEYEDLKDIIAMLGLEELAQNERQTVYRARRLERFLTQPFFTTEQFSGIPGKMVSLDQTLTGCEAILDDKCSGLSEQALYMIGAVDEAELEHQEREAQEVEEIGQ.

135-142 contacts ATP; sequence GGAGVGKT.

The protein belongs to the ATPase alpha/beta chains family. As to quaternary structure, F-type ATPases have 2 components, CF(1) - the catalytic core - and CF(0) - the membrane proton channel. CF(1) has five subunits: alpha(3), beta(3), gamma(1), delta(1), epsilon(1). CF(0) has four main subunits: a(1), b(1), b'(1) and c(9-12).

The protein resides in the cellular thylakoid membrane. The catalysed reaction is ATP + H2O + 4 H(+)(in) = ADP + phosphate + 5 H(+)(out). Produces ATP from ADP in the presence of a proton gradient across the membrane. The catalytic sites are hosted primarily by the beta subunits. In Acaryochloris marina (strain MBIC 11017), this protein is ATP synthase subunit beta (atpD).